Reading from the N-terminus, the 226-residue chain is uncharacterized protein (226 aa).

Belongs to the SSM1 family.

This is an uncharacterized protein from Schizosaccharomyces pombe (strain 972 / ATCC 24843) (Fission yeast).